A 751-amino-acid polypeptide reads, in one-letter code: Photosystem I P700 chlorophyll a apoprotein A1 (751 aa).

Transmembrane regions (helical) follow at residues 73 to 96 (IFSA…FHGA), 159 to 182 (LYCT…FHYH), 198 to 222 (MNHH…HLSL), 294 to 312 (TAHH…GHMY), 349 to 372 (WHAQ…HHMY), 388 to 414 (LSLF…IFMV), 435 to 457 (AIVS…LYIH), and 532 to 550 (FLVH…LILV). Residues Cys-574 and Cys-583 each contribute to the [4Fe-4S] cluster site. The next 2 helical transmembrane spans lie at 590–611 (HVFL…HFSW) and 665–687 (LSAY…MFLF). Residue His-676 participates in chlorophyll a' binding. Chlorophyll a contacts are provided by Met-684 and Tyr-692. Trp-693 serves as a coordination point for phylloquinone. The chain crosses the membrane as a helical span at residues 725-745 (AVGVAHYLLGGIGTTWAFFLA).

Belongs to the PsaA/PsaB family. In terms of assembly, the PsaA/B heterodimer binds the P700 chlorophyll special pair and subsequent electron acceptors. PSI consists of a core antenna complex that captures photons, and an electron transfer chain that converts photonic excitation into a charge separation. The eukaryotic PSI reaction center is composed of at least 11 subunits. P700 is a chlorophyll a/chlorophyll a' dimer, A0 is one or more chlorophyll a, A1 is one or both phylloquinones and FX is a shared 4Fe-4S iron-sulfur center. serves as cofactor.

It localises to the plastid. The protein localises to the chloroplast thylakoid membrane. It carries out the reaction reduced [plastocyanin] + hnu + oxidized [2Fe-2S]-[ferredoxin] = oxidized [plastocyanin] + reduced [2Fe-2S]-[ferredoxin]. In terms of biological role, psaA and PsaB bind P700, the primary electron donor of photosystem I (PSI), as well as the electron acceptors A0, A1 and FX. PSI is a plastocyanin/cytochrome c6-ferredoxin oxidoreductase, converting photonic excitation into a charge separation, which transfers an electron from the donor P700 chlorophyll pair to the spectroscopically characterized acceptors A0, A1, FX, FA and FB in turn. Oxidized P700 is reduced on the lumenal side of the thylakoid membrane by plastocyanin or cytochrome c6. The protein is Photosystem I P700 chlorophyll a apoprotein A1 of Pyropia yezoensis (Susabi-nori).